The sequence spans 748 residues: WD repeat-containing protein 91 (748 aa).

Residues 183–228 are a coiled coil; it reads QRTNQVQEENEVLRQKLFALQAEIHRLKKEEQQQEEEAAALVQHKL. Ser257 bears the Phosphoserine mark. Positions 266-279 are enriched in low complexity; that stretch reads LLPQSKKSPSRLSP. Residues 266 to 368 are disordered; it reads LLPQSKKSPS…PEVSGAEAEP (103 aa). The span at 284-300 shows a compositional bias: polar residues; that stretch reads PQAQSSAKKDSFSSQAT. Phosphoserine occurs at positions 289 and 294. Basic and acidic residues predominate over residues 333-344; it reads RLQDHGKERREL. Polar residues predominate over residues 345 to 354; that stretch reads LSTSSSQSQC. 7 WD repeats span residues 407–446, 449–489, 512–556, 561–600, 603–642, 665–703, and 710–748; these read EHHSSIMHCRVDCSGRRVASLDVDGVIKVWSFNPIMQTKA, ISKS…NLCE, VCSA…QQLQ, PEPIAINCTAFNHNGNLLVTGAADGVIRLFDMQQHECAMS, AHCGEVYSVEFSCDENAVYSIGEDRKFIQWNIHKSGLKVS, VQVPRGRLFAFDSEGNYMLTCSATGGLIYKLGSEEKVLE, and GHRAPVVTVDWSTAMDCGTCLTASMDGKIKLTTLLAHKL.

Belongs to the WD repeat WDR91 family. As to quaternary structure, interacts with WDR81; involved in early to late endosome cargo transport. Interacts with BECN1; negatively regulates the PI3 kinase/PI3K activity associated with endosomal membranes.

It is found in the early endosome membrane. Its subcellular location is the late endosome membrane. Functionally, functions as a negative regulator of the PI3 kinase/PI3K activity associated with endosomal membranes via BECN1, a core subunit of the PI3K complex. By modifying the phosphatidylinositol 3-phosphate/PtdInsP3 content of endosomal membranes may regulate endosome fusion, recycling, sorting and early to late endosome transport. It is for instance, required for the delivery of cargos like BST2/tetherin from early to late endosome and thereby participates indirectly to their degradation by the lysosome. May play a role in meiosis. In Mus musculus (Mouse), this protein is WD repeat-containing protein 91.